The chain runs to 239 residues: NAD(P)H-quinone oxidoreductase subunit K, chloroplastic (239 aa).

Residues cysteine 43, cysteine 44, cysteine 108, and cysteine 139 each contribute to the [4Fe-4S] cluster site. Residues 217–239 (KSSVSSRELGNESGKEDVSIQNK) form a disordered region. Over residues 225-239 (LGNESGKEDVSIQNK) the composition is skewed to basic and acidic residues.

Belongs to the complex I 20 kDa subunit family. In terms of assembly, NDH is composed of at least 16 different subunits, 5 of which are encoded in the nucleus. Requires [4Fe-4S] cluster as cofactor.

It is found in the plastid. It localises to the chloroplast thylakoid membrane. The catalysed reaction is a plastoquinone + NADH + (n+1) H(+)(in) = a plastoquinol + NAD(+) + n H(+)(out). It carries out the reaction a plastoquinone + NADPH + (n+1) H(+)(in) = a plastoquinol + NADP(+) + n H(+)(out). Functionally, NDH shuttles electrons from NAD(P)H:plastoquinone, via FMN and iron-sulfur (Fe-S) centers, to quinones in the photosynthetic chain and possibly in a chloroplast respiratory chain. The immediate electron acceptor for the enzyme in this species is believed to be plastoquinone. Couples the redox reaction to proton translocation, and thus conserves the redox energy in a proton gradient. The protein is NAD(P)H-quinone oxidoreductase subunit K, chloroplastic of Acorus calamus var. americanus (American sweet flag).